The chain runs to 145 residues: Deoxyuridine 5'-triphosphate nucleotidohydrolase (145 aa).

Residues 62–64 (RSG), asparagine 75, 79–81 (TVD), and lysine 89 each bind substrate.

It belongs to the dUTPase family. The cofactor is Mg(2+).

It catalyses the reaction dUTP + H2O = dUMP + diphosphate + H(+). It participates in pyrimidine metabolism; dUMP biosynthesis; dUMP from dCTP (dUTP route): step 2/2. This enzyme is involved in nucleotide metabolism: it produces dUMP, the immediate precursor of thymidine nucleotides and it decreases the intracellular concentration of dUTP so that uracil cannot be incorporated into DNA. This is Deoxyuridine 5'-triphosphate nucleotidohydrolase from Helicobacter pylori (strain J99 / ATCC 700824) (Campylobacter pylori J99).